We begin with the raw amino-acid sequence, 49 residues long: Large ribosomal subunit protein bL33 (49 aa).

It belongs to the bacterial ribosomal protein bL33 family.

This Pseudothermotoga lettingae (strain ATCC BAA-301 / DSM 14385 / NBRC 107922 / TMO) (Thermotoga lettingae) protein is Large ribosomal subunit protein bL33.